The following is a 165-amino-acid chain: Regulator of ribonuclease activity A (165 aa).

It belongs to the RraA family. In terms of assembly, homotrimer. Binds to both RNA-binding sites in the C-terminal region of Rne and to RhlB.

The protein localises to the cytoplasm. Functionally, globally modulates RNA abundance by binding to RNase E (Rne) and regulating its endonucleolytic activity. Can modulate Rne action in a substrate-dependent manner by altering the composition of the degradosome. Modulates RNA-binding and helicase activities of the degradosome. The protein is Regulator of ribonuclease activity A of Pseudoalteromonas translucida (strain TAC 125).